A 391-amino-acid polypeptide reads, in one-letter code: Multidrug resistance protein MdtL (391 aa).

12 consecutive transmembrane segments (helical) span residues 4–24 (FLIC…MYLV), 42–62 (IAFS…GKVA), 69–89 (PVAI…SLAE), 93–113 (LFLA…VVAF), 131–151 (LLNG…HLIM), 158–178 (SLFW…LFIL), 203–222 (FFLS…LTFV), 245–265 (ALTA…LGIF), 269–289 (TLMI…AVSP), 293–313 (ISLF…GVAM), 324–346 (AGVA…IWLA), and 363–383 (ACSI…PVAA).

The protein belongs to the major facilitator superfamily. DHA1 family. MdtL (TC 2.A.1.2.22) subfamily.

It localises to the cell inner membrane. In terms of biological role, confers resistance to chloramphenicol. The sequence is that of Multidrug resistance protein MdtL from Escherichia fergusonii (strain ATCC 35469 / DSM 13698 / CCUG 18766 / IAM 14443 / JCM 21226 / LMG 7866 / NBRC 102419 / NCTC 12128 / CDC 0568-73).